The primary structure comprises 229 residues: Vacuolar protein-sorting-associated protein 60 (229 aa).

Residues 9–155 (NKKSHDQLLQ…QGDELQEVLA (147 aa)) adopt a coiled-coil conformation. Ser12 is modified (phosphoserine). The segment at 128–159 (INIDKLQDMQDEMLDLIEQGDELQEVLAMNNN) is interaction with VTA1. Residues 186–229 (PTSENSLGNDMPSYLLGANAPPAFIDEEPNLDTEDKNKALESAQ) are disordered. Basic and acidic residues predominate over residues 218–229 (TEDKNKALESAQ).

This sequence belongs to the SNF7 family. In terms of assembly, interacts with VTA1; the interaction occurs at he endosomal membrane.

Its subcellular location is the endosome membrane. The protein resides in the vacuole membrane. In terms of biological role, has a role in a late stage of multivesicular body (MVB) formation. Can stimulate VPS4 ATPase activity via VTA1. This is Vacuolar protein-sorting-associated protein 60 (VPS60) from Saccharomyces cerevisiae (strain ATCC 204508 / S288c) (Baker's yeast).